The sequence spans 54 residues: Lectin alpha-1 chain (54 aa).

This sequence belongs to the leguminous lectin family. As to quaternary structure, tetramer of two alpha and two beta chains.

The protein is Lectin alpha-1 chain of Lathyrus hirsutus (Rough pea).